Here is a 221-residue protein sequence, read N- to C-terminus: Glutathione S-transferase A3 (221 aa).

At Ala2 the chain carries N-acetylalanine. The region spanning 3 to 83 (GKPVLHYFDG…YIASKYNLYG (81 aa)) is the GST N-terminal domain. Lys4 carries the post-translational modification N6-succinyllysine. Residues Tyr9, Arg45, 54 to 55 (QV), and 67 to 68 (QT) each bind glutathione. One can recognise a GST C-terminal domain in the interval 85 to 207 (DMKERAIIDM…LQPGSQRKPF (123 aa)).

As to quaternary structure, homodimer.

Its subcellular location is the cytoplasm. The enzyme catalyses RX + glutathione = an S-substituted glutathione + a halide anion + H(+). The catalysed reaction is androst-5-ene-3,17-dione = androst-4-ene-3,17-dione. It catalyses the reaction pregn-5-ene-3,20-dione = progesterone. In terms of biological role, conjugation of reduced glutathione to a wide number of exogenous and endogenous hydrophobic electrophiles. Catalyzes isomerization reactions that contribute to the biosynthesis of steroid hormones. Efficiently catalyze obligatory double-bond isomerizations of delta(5)-androstene-3,17-dione and delta(5)-pregnene-3,20-dione, precursors to testosterone and progesterone, respectively. Has a high catalytic activity for aflatoxin B1-8,9 epoxide. This Mus musculus (Mouse) protein is Glutathione S-transferase A3.